Consider the following 421-residue polypeptide: Gamma-glutamyl phosphate reductase (421 aa).

The protein belongs to the gamma-glutamyl phosphate reductase family.

It localises to the cytoplasm. It carries out the reaction L-glutamate 5-semialdehyde + phosphate + NADP(+) = L-glutamyl 5-phosphate + NADPH + H(+). The protein operates within amino-acid biosynthesis; L-proline biosynthesis; L-glutamate 5-semialdehyde from L-glutamate: step 2/2. In terms of biological role, catalyzes the NADPH-dependent reduction of L-glutamate 5-phosphate into L-glutamate 5-semialdehyde and phosphate. The product spontaneously undergoes cyclization to form 1-pyrroline-5-carboxylate. The sequence is that of Gamma-glutamyl phosphate reductase from Nitrosospira multiformis (strain ATCC 25196 / NCIMB 11849 / C 71).